A 215-amino-acid polypeptide reads, in one-letter code: Probable phosphoglycerate mutase GpmB (215 aa).

Residues 8–15 (RHGETQWN), 21–22 (QG), Arg-58, Lys-60, 82–85 (ELDM), 104–105 (RR), and 151–152 (GI) contribute to the substrate site. The Tele-phosphohistidine intermediate role is filled by His-9. Glu-82 acts as the Proton donor/acceptor in catalysis.

Belongs to the phosphoglycerate mutase family. GpmB subfamily.

The enzyme catalyses (2R)-2-phosphoglycerate = (2R)-3-phosphoglycerate. Its pathway is carbohydrate degradation; glycolysis; pyruvate from D-glyceraldehyde 3-phosphate: step 3/5. The chain is Probable phosphoglycerate mutase GpmB from Salmonella agona (strain SL483).